The chain runs to 167 residues: Peptide deformylase (167 aa).

Cys-90 and His-132 together coordinate Fe cation. The active site involves Glu-133. A Fe cation-binding site is contributed by His-136.

This sequence belongs to the polypeptide deformylase family. Fe(2+) is required as a cofactor.

It catalyses the reaction N-terminal N-formyl-L-methionyl-[peptide] + H2O = N-terminal L-methionyl-[peptide] + formate. Functionally, removes the formyl group from the N-terminal Met of newly synthesized proteins. Requires at least a dipeptide for an efficient rate of reaction. N-terminal L-methionine is a prerequisite for activity but the enzyme has broad specificity at other positions. This Dehalococcoides mccartyi (strain CBDB1) protein is Peptide deformylase.